Here is a 325-residue protein sequence, read N- to C-terminus: Tetraacyldisaccharide 4'-kinase (325 aa).

Ser-54–Thr-61 serves as a coordination point for ATP.

Belongs to the LpxK family.

The catalysed reaction is a lipid A disaccharide + ATP = a lipid IVA + ADP + H(+). The protein operates within glycolipid biosynthesis; lipid IV(A) biosynthesis; lipid IV(A) from (3R)-3-hydroxytetradecanoyl-[acyl-carrier-protein] and UDP-N-acetyl-alpha-D-glucosamine: step 6/6. Functionally, transfers the gamma-phosphate of ATP to the 4'-position of a tetraacyldisaccharide 1-phosphate intermediate (termed DS-1-P) to form tetraacyldisaccharide 1,4'-bis-phosphate (lipid IVA). The polypeptide is Tetraacyldisaccharide 4'-kinase (Rickettsia felis (strain ATCC VR-1525 / URRWXCal2) (Rickettsia azadi)).